Reading from the N-terminus, the 560-residue chain is Membrane protein insertase YidC (560 aa).

A helical membrane pass occupies residues 1–21 (MDIKRTILIAALAVVSYVMVL). Residues 42-66 (VAPGLPDGVPAGNNGASADVPSANA) form a disordered region. 5 consecutive transmembrane segments (helical) span residues 341-361 (LELTVDYGFLWFIAQPIFWLL), 367-387 (LLGNWGWSIIVLTMLIKGLFF), 437-457 (LGGCLPILVQMPVFLALYWVL), 468-488 (WMLWITDLSIKDPFFILPIIM), and 515-535 (PIIFTFFFLWFPAGLVLYWVV).

Belongs to the OXA1/ALB3/YidC family. Type 1 subfamily. Interacts with the Sec translocase complex via SecD. Specifically interacts with transmembrane segments of nascent integral membrane proteins during membrane integration.

It is found in the cell inner membrane. Its function is as follows. Required for the insertion and/or proper folding and/or complex formation of integral membrane proteins into the membrane. Involved in integration of membrane proteins that insert both dependently and independently of the Sec translocase complex, as well as at least some lipoproteins. Aids folding of multispanning membrane proteins. The sequence is that of Membrane protein insertase YidC from Pseudomonas putida (strain GB-1).